The following is a 59-amino-acid chain: MLTWALIFFIIAIIAAAFGFGGIAVAAAGIAKILFFLFLVMFVIFLIMGLLGRRGPPPV.

A run of 2 helical transmembrane segments spans residues 5-25 and 30-50; these read ALIF…GIAV and IAKI…IMGL.

The protein belongs to the UPF0391 family.

The protein resides in the cell membrane. In Legionella pneumophila (strain Corby), this protein is UPF0391 membrane protein LPC_1949.